We begin with the raw amino-acid sequence, 134 residues long: Global transcriptional regulator Spx (134 aa).

The cysteines at positions 10 and 13 are disulfide-linked.

This sequence belongs to the ArsC family. Spx subfamily. In terms of assembly, interacts with the C-terminal domain of the alpha subunit of the RNAP.

The protein localises to the cytoplasm. Functionally, global transcriptional regulator that plays a key role in stress response and exerts either positive or negative regulation of genes. Acts by interacting with the C-terminal domain of the alpha subunit of the RNA polymerase (RNAP). This interaction can enhance binding of RNAP to the promoter region of target genes and stimulate their transcription, or block interaction of RNAP with activator. The chain is Global transcriptional regulator Spx from Streptococcus pyogenes serotype M3 (strain ATCC BAA-595 / MGAS315).